The chain runs to 166 residues: Protein-export protein SecB (166 aa).

The protein belongs to the SecB family. As to quaternary structure, homotetramer, a dimer of dimers. One homotetramer interacts with 1 SecA dimer.

It localises to the cytoplasm. Its function is as follows. One of the proteins required for the normal export of preproteins out of the cell cytoplasm. It is a molecular chaperone that binds to a subset of precursor proteins, maintaining them in a translocation-competent state. It also specifically binds to its receptor SecA. The chain is Protein-export protein SecB from Sinorhizobium fredii (strain NBRC 101917 / NGR234).